The sequence spans 276 residues: Diaminopimelate epimerase (276 aa).

The substrate site is built by asparagine 13, glutamine 46, and asparagine 66. Cysteine 75 (proton donor) is an active-site residue. Substrate contacts are provided by residues 76–77 (GN), asparagine 159, asparagine 192, and 210–211 (ER). Cysteine 219 acts as the Proton acceptor in catalysis. 220–221 (GT) contacts substrate.

The protein belongs to the diaminopimelate epimerase family. As to quaternary structure, homodimer.

The protein localises to the cytoplasm. It catalyses the reaction (2S,6S)-2,6-diaminopimelate = meso-2,6-diaminopimelate. Its pathway is amino-acid biosynthesis; L-lysine biosynthesis via DAP pathway; DL-2,6-diaminopimelate from LL-2,6-diaminopimelate: step 1/1. Its function is as follows. Catalyzes the stereoinversion of LL-2,6-diaminopimelate (L,L-DAP) to meso-diaminopimelate (meso-DAP), a precursor of L-lysine and an essential component of the bacterial peptidoglycan. This chain is Diaminopimelate epimerase, found in Pseudomonas savastanoi pv. phaseolicola (strain 1448A / Race 6) (Pseudomonas syringae pv. phaseolicola (strain 1448A / Race 6)).